We begin with the raw amino-acid sequence, 140 residues long: Nucleoside diphosphate kinase (140 aa).

Lys11, Phe59, Arg87, Thr93, Arg104, and Asn114 together coordinate ATP. The active-site Pros-phosphohistidine intermediate is His117.

This sequence belongs to the NDK family. As to quaternary structure, homotetramer. The cofactor is Mg(2+).

It localises to the cytoplasm. It catalyses the reaction a 2'-deoxyribonucleoside 5'-diphosphate + ATP = a 2'-deoxyribonucleoside 5'-triphosphate + ADP. The catalysed reaction is a ribonucleoside 5'-diphosphate + ATP = a ribonucleoside 5'-triphosphate + ADP. Its function is as follows. Major role in the synthesis of nucleoside triphosphates other than ATP. The ATP gamma phosphate is transferred to the NDP beta phosphate via a ping-pong mechanism, using a phosphorylated active-site intermediate. This Bartonella henselae (strain ATCC 49882 / DSM 28221 / CCUG 30454 / Houston 1) (Rochalimaea henselae) protein is Nucleoside diphosphate kinase.